The following is a 561-amino-acid chain: MVKVLQLCFLSAISLVQALNSTVDQKDEAKVDINTVFDNDSTNFCRMDKTEAIGATCDVTFHEINEVNNNIRPQLLSLVQSDFFKYFKLDLYKECPFWSDNNGYCVNRACAVDVVEDWDSLPEYWQPEILGNIENATTDITDDECSFLDELCDKPRFEAEKDIEYCDTNDFNSQHSVLVDLTANPERFTGYGGEQSSQIWSSIYKENCFSLGDENQCLAKDAFYRLISGLHASIGTHLSNEHLNTETGKWEPNLELFMTRVGNFPDRVSNIYFNFAVVAKALWKIRPYMNELGFCNAYNEDVKGMIDGVVSQLNSKVFNEDLLFHDEVSGQLKDDFRIRFKNVTKIMDCVQCDRCRLWGKVQTTGYATSLKILFEMDNDDDVARQHVVDKLTKYELIALFNTFDRLSKSVEAVNRFEEMYNYQLKSPGEKLASFFQLDNFFKVLNDKFNSANHSSQEKESVSNVEKKVNEFNDLKMPEKKKETHTEVREQASGVFKEAWDVEWKNFKQALRFIVTSYTDLPSTVSKYTVLKLNKLWNKFIGVPNYLEEGEELEYPSYNYEE.

The N-terminal stretch at 1 to 18 (MVKVLQLCFLSAISLVQA) is a signal peptide. N-linked (GlcNAc...) asparagine glycans are attached at residues Asn-20 and Asn-39. 5 disulfides stabilise this stretch: Cys-95–Cys-349, Cys-105–Cys-110, Cys-145–Cys-166, Cys-152–Cys-295, and Cys-352–Cys-355. Residue Asn-135 is glycosylated (N-linked (GlcNAc...) asparagine). FAD-binding residues include Arg-187, Thr-189, Trp-200, Ser-228, His-231, and Arg-260. N-linked (GlcNAc...) asparagine glycosylation is present at Asn-342. Cys-352 (nucleophile) is an active-site residue. Cys-355 is a catalytic residue. Residue Asn-452 is glycosylated (N-linked (GlcNAc...) asparagine).

Belongs to the EROs family. In terms of assembly, may function both as a monomer and a homodimer. FAD is required as a cofactor.

It is found in the endoplasmic reticulum membrane. In terms of biological role, essential oxidoreductase that oxidizes proteins in the endoplasmic reticulum to produce disulfide bonds. Acts by oxidizing directly PDI1 isomerase through a direct disulfide exchange. Does not act as a direct oxidant of folding substrate, but relies on PDI1 to transfer oxidizing equivalent. Does not oxidize all pdi related proteins, suggesting that it can discriminate between PDI1 and related proteins. Its reoxidation probably involves electron transfer to molecular oxygen via FAD. Acts independently of glutathione. May be responsible for a significant proportion of reactive oxygen species (ROS) in the cell, thereby being a source of oxidative stress. In Kluyveromyces lactis (strain ATCC 8585 / CBS 2359 / DSM 70799 / NBRC 1267 / NRRL Y-1140 / WM37) (Yeast), this protein is Endoplasmic reticulum oxidoreductin-1 (ERO1).